A 94-amino-acid polypeptide reads, in one-letter code: MLQSNEYFSGKVKSIGFTSSSTGRASVGVMAEGEYTFGTAEPEEMTVVSGALKVLLPGTVEWKVYTAGEVFNVPGHSEFHLQVAEPASYLCRYL.

It belongs to the nucleoside phosphorylase PpnP family.

It catalyses the reaction a purine D-ribonucleoside + phosphate = a purine nucleobase + alpha-D-ribose 1-phosphate. The catalysed reaction is adenosine + phosphate = alpha-D-ribose 1-phosphate + adenine. It carries out the reaction cytidine + phosphate = cytosine + alpha-D-ribose 1-phosphate. The enzyme catalyses guanosine + phosphate = alpha-D-ribose 1-phosphate + guanine. It catalyses the reaction inosine + phosphate = alpha-D-ribose 1-phosphate + hypoxanthine. The catalysed reaction is thymidine + phosphate = 2-deoxy-alpha-D-ribose 1-phosphate + thymine. It carries out the reaction uridine + phosphate = alpha-D-ribose 1-phosphate + uracil. The enzyme catalyses xanthosine + phosphate = alpha-D-ribose 1-phosphate + xanthine. Catalyzes the phosphorolysis of diverse nucleosides, yielding D-ribose 1-phosphate and the respective free bases. Can use uridine, adenosine, guanosine, cytidine, thymidine, inosine and xanthosine as substrates. Also catalyzes the reverse reactions. The protein is Pyrimidine/purine nucleoside phosphorylase of Salmonella typhimurium (strain LT2 / SGSC1412 / ATCC 700720).